The primary structure comprises 79 residues: MKFNNKKNTFKKRRKVCFFTENKVTKIDFKDIELLQRFITDRGRILSRRVTNTSARWQRQLAIAIKRARHMALIPFIQQ.

This sequence belongs to the bacterial ribosomal protein bS18 family. Part of the 30S ribosomal subunit. Forms a tight heterodimer with protein bS6.

Functionally, binds as a heterodimer with protein bS6 to the central domain of the 16S rRNA, where it helps stabilize the platform of the 30S subunit. This chain is Small ribosomal subunit protein bS18, found in Aster yellows witches'-broom phytoplasma (strain AYWB).